A 287-amino-acid polypeptide reads, in one-letter code: Undecaprenyl-diphosphatase (287 aa).

7 helical membrane passes run 6-26 (LHLL…FIPV), 45-65 (SGKV…MWIF), 89-109 (NLLL…KSIK), 111-131 (VFYH…IMLW), 204-224 (ATEF…VYDL), 238-258 (AIAV…RAVL), and 266-286 (YRVF…WIYA).

This sequence belongs to the UppP family.

The protein resides in the cell inner membrane. It catalyses the reaction di-trans,octa-cis-undecaprenyl diphosphate + H2O = di-trans,octa-cis-undecaprenyl phosphate + phosphate + H(+). Catalyzes the dephosphorylation of undecaprenyl diphosphate (UPP). Confers resistance to bacitracin. In Bordetella bronchiseptica (strain ATCC BAA-588 / NCTC 13252 / RB50) (Alcaligenes bronchisepticus), this protein is Undecaprenyl-diphosphatase.